Consider the following 198-residue polypeptide: FMN-dependent NADH:quinone oxidoreductase (198 aa).

Residues S10 and 16–18 (SIS) contribute to the FMN site.

This sequence belongs to the azoreductase type 1 family. As to quaternary structure, homodimer. Requires FMN as cofactor.

It catalyses the reaction 2 a quinone + NADH + H(+) = 2 a 1,4-benzosemiquinone + NAD(+). It carries out the reaction N,N-dimethyl-1,4-phenylenediamine + anthranilate + 2 NAD(+) = 2-(4-dimethylaminophenyl)diazenylbenzoate + 2 NADH + 2 H(+). Quinone reductase that provides resistance to thiol-specific stress caused by electrophilic quinones. In terms of biological role, also exhibits azoreductase activity. Catalyzes the reductive cleavage of the azo bond in aromatic azo compounds to the corresponding amines. The chain is FMN-dependent NADH:quinone oxidoreductase from Mycoplasmopsis pulmonis (strain UAB CTIP) (Mycoplasma pulmonis).